Consider the following 253-residue polypeptide: Major prion protein (253 aa).

The N-terminal stretch at 1 to 22 (MANLGCWMLVLFVATWSDLGLC) is a signal peptide. The segment at 23 to 38 (KKRPKPGGWNTGGSRY) is interaction with ADGRG6. Residues 23–230 (KKRPKPGGWN…ESQAYYQRGS (208 aa)) are interaction with GRB2, ERI3 and SYN1. The disordered stretch occupies residues 26–108 (PKPGGWNTGG…WNKPSKPKTN (83 aa)). A run of 5 repeats spans residues 51–59 (PQGGGGWGQ), 60–67 (PHGGGWGQ), 68–75 (PHGGGWGQ), 76–83 (PHGGGWGQ), and 84–91 (PHGGGWGQ). The 5 X 8 AA tandem repeats of P-H-G-G-G-W-G-Q stretch occupies residues 51 to 91 (PQGGGGWGQPHGGGWGQPHGGGWGQPHGGGWGQPHGGGWGQ). Gly residues predominate over residues 52 to 95 (QGGGGWGQPHGGGWGQPHGGGWGQPHGGGWGQPHGGGWGQGGGT). Cu(2+) contacts are provided by H61, G62, G63, H69, G70, G71, H77, G78, G79, H85, G86, and G87. A disulfide bond links C179 and C214. 2 N-linked (GlcNAc...) asparagine glycosylation sites follow: N181 and N197. S230 carries GPI-anchor amidated serine lipidation. Positions 231–253 (SMVLFSSPPVILLISFLIFLIVG) are cleaved as a propeptide — removed in mature form.

It belongs to the prion family. In terms of assembly, monomer and homodimer. Has a tendency to aggregate into amyloid fibrils containing a cross-beta spine, formed by a steric zipper of superposed beta-strands. Soluble oligomers may represent an intermediate stage on the path to fibril formation. Copper binding may promote oligomerization. Interacts with GRB2, APP, ERI3/PRNPIP and SYN1. Mislocalized cytosolically exposed PrP interacts with MGRN1; this interaction alters MGRN1 subcellular location and causes lysosomal enlargement. Interacts with KIAA1191. Interacts with ADGRG6. In terms of processing, the glycosylation pattern (the amount of mono-, di- and non-glycosylated forms or glycoforms) seems to differ in normal and CJD prion.

The protein resides in the cell membrane. It localises to the golgi apparatus. In terms of biological role, its primary physiological function is unclear. May play a role in neuronal development and synaptic plasticity. May be required for neuronal myelin sheath maintenance. May promote myelin homeostasis through acting as an agonist for ADGRG6 receptor. May play a role in iron uptake and iron homeostasis. Soluble oligomers are toxic to cultured neuroblastoma cells and induce apoptosis (in vitro). Association with GPC1 (via its heparan sulfate chains) targets PRNP to lipid rafts. Also provides Cu(2+) or Zn(2+) for the ascorbate-mediated GPC1 deaminase degradation of its heparan sulfate side chains. The chain is Major prion protein (PRNP) from Homo sapiens (Human).